A 350-amino-acid chain; its full sequence is Casein kinase II subunit alpha' (350 aa).

Phosphotyrosine is present on tyrosine 13. 2 positions are modified to phosphoserine: serine 18 and serine 21. One can recognise a Protein kinase domain in the interval 40–325; it reads YQLVRKLGRG…AKEAMEHPYF (286 aa). ATP contacts are provided by residues 46–54 and lysine 69; that span reads LGRGKYSEV. Lysine 97 carries the N6-acetyllysine modification. Aspartate 157 functions as the Proton acceptor in the catalytic mechanism. Serine 288 bears the Phosphoserine mark.

This sequence belongs to the protein kinase superfamily. Ser/Thr protein kinase family. CK2 subfamily. Heterotetramer composed of two catalytic subunits (alpha chain and/or alpha' chain) and two regulatory subunits (beta chains). The tetramer can exist as a combination of 2 alpha/2 beta, 2 alpha'/2 beta or 1 alpha/1 alpha'/2 beta subunits. Also part of a CK2-SPT16-SSRP1 complex composed of SSRP1, SUPT16H, CSNK2A1, CSNK2A2 and CSNK2B, which forms following UV irradiation. Interacts with RNPS1. Interacts with CSNK2A2IP (via C-terminus). Interacts with SIRT6; preventing CSNK2A2 localization to the nucleus. Interacts with HIRIP3. Highly expressed in brain, testis and mature epididymal spermatozoa. Weakly expressed in kidney, liver, lung, spleen and thymus (at protein level).

It localises to the nucleus. The protein resides in the cytoplasm. The enzyme catalyses L-seryl-[protein] + ATP = O-phospho-L-seryl-[protein] + ADP + H(+). It catalyses the reaction L-threonyl-[protein] + ATP = O-phospho-L-threonyl-[protein] + ADP + H(+). With respect to regulation, constitutively active protein kinase whose activity is not directly affected by phosphorylation. Seems to be regulated by level of expression and localization. Its function is as follows. Catalytic subunit of a constitutively active serine/threonine-protein kinase complex that phosphorylates a large number of substrates containing acidic residues C-terminal to the phosphorylated serine or threonine. Regulates numerous cellular processes, such as cell cycle progression, apoptosis and transcription, as well as viral infection. May act as a regulatory node which integrates and coordinates numerous signals leading to an appropriate cellular response. During mitosis, functions as a component of the p53/TP53-dependent spindle assembly checkpoint (SAC) that maintains cyclin-B-CDK1 activity and G2 arrest in response to spindle damage. Also required for p53/TP53-mediated apoptosis, phosphorylating 'Ser-392' of p53/TP53 following UV irradiation. Phosphorylates a number of DNA repair proteins in response to DNA damage, such as MDC1, RAD9A, RAD51 and HTATSF1, promoting their recruitment to DNA damage sites. Can also negatively regulate apoptosis. Phosphorylates the caspases CASP9 and CASP2 and the apoptotic regulator NOL3. Phosphorylation protects CASP9 from cleavage and activation by CASP8, and inhibits the dimerization of CASP2 and activation of CASP8. Regulates transcription by direct phosphorylation of RNA polymerases I, II, III and IV. Also phosphorylates and regulates numerous transcription factors including NF-kappa-B, STAT1, CREB1, IRF1, IRF2, ATF1, SRF, MAX, JUN, FOS, MYC and MYB. Phosphorylates Hsp90 and its co-chaperones FKBP4 and CDC37, which is essential for chaperone function. Regulates Wnt signaling by phosphorylating CTNNB1 and the transcription factor LEF1. Acts as an ectokinase that phosphorylates several extracellular proteins. May phosphorylate histone H2A on 'Ser-1'. The protein is Casein kinase II subunit alpha' (Csnk2a2) of Mus musculus (Mouse).